A 349-amino-acid chain; its full sequence is Peroxidase 23 (349 aa).

The N-terminal stretch at methionine 1 to alanine 29 is a signal peptide. Glutamine 30 is subject to Pyrrolidone carboxylic acid. Disulfide bonds link cysteine 40–cysteine 120, cysteine 73–cysteine 78, cysteine 126–cysteine 329, and cysteine 206–cysteine 238. Histidine 71 (proton acceptor) is an active-site residue. Residues aspartate 72, valine 75, glycine 77, aspartate 79, and serine 81 each coordinate Ca(2+). A glycan (N-linked (GlcNAc...) asparagine) is linked at asparagine 86. Proline 168 provides a ligand contact to substrate. Histidine 199 is a binding site for heme b. Threonine 200 is a Ca(2+) binding site. 2 N-linked (GlcNAc...) asparagine glycosylation sites follow: asparagine 217 and asparagine 243. Ca(2+) is bound by residues aspartate 251, threonine 254, and aspartate 259.

It belongs to the peroxidase family. Classical plant (class III) peroxidase subfamily. Heme b serves as cofactor. It depends on Ca(2+) as a cofactor.

It localises to the secreted. The protein resides in the vacuole. It carries out the reaction 2 a phenolic donor + H2O2 = 2 a phenolic radical donor + 2 H2O. In terms of biological role, removal of H(2)O(2), oxidation of toxic reductants, biosynthesis and degradation of lignin, suberization, auxin catabolism, response to environmental stresses such as wounding, pathogen attack and oxidative stress. These functions might be dependent on each isozyme/isoform in each plant tissue. This chain is Peroxidase 23 (PER23), found in Arabidopsis thaliana (Mouse-ear cress).